We begin with the raw amino-acid sequence, 282 residues long: 3-hydroxyanthranilate 3,4-dioxygenase (282 aa).

The tract at residues 1–160 (MAMAINVKKW…SKQYKSGKPD (160 aa)) is domain A (catalytic). R43 lines the O2 pocket. Fe cation-binding residues include H47, E53, and H91. E53 is a binding site for substrate. Substrate contacts are provided by R95 and E105. Residues 161–177 (PDQPKAKMPFCLSTEQV) form a linker region. The tract at residues 178–282 (MEPFSFQHWL…LSTSQVPLPM (105 aa)) is domain B.

Belongs to the 3-HAO family. As to quaternary structure, monomer. The cofactor is Fe(2+).

It localises to the cytoplasm. The protein localises to the cytosol. The catalysed reaction is 3-hydroxyanthranilate + O2 = (2Z,4Z)-2-amino-3-carboxymuconate 6-semialdehyde. It functions in the pathway cofactor biosynthesis; NAD(+) biosynthesis; quinolinate from L-kynurenine: step 3/3. Functionally, catalyzes the oxidative ring opening of 3-hydroxyanthranilate to 2-amino-3-carboxymuconate semialdehyde, which spontaneously cyclizes to quinolinate. In Xenopus laevis (African clawed frog), this protein is 3-hydroxyanthranilate 3,4-dioxygenase (haao).